A 762-amino-acid polypeptide reads, in one-letter code: Cell surface protein (762 aa).

Positions 1–26 are cleaved as a signal peptide; sequence MKNLKKLIAVVSTFALVFSAMAVGFA. SLH domains lie at 27–90, 92–155, and 156–204; these read ATTP…EMAK, EKSA…WPYG, and YLAK…KEVL. O-linked (Glc...) tyrosine glycans are attached at residues Tyr-297, Tyr-516, Tyr-520, and Tyr-632.

In terms of processing, glycosylated; contains 8% carbohydrates, which correspond to about 40 to 50 sugar molecules per monomer. O-linked glycans consist of Glc, GalNAc and GlcNAc.

The protein localises to the secreted. Its subcellular location is the cell wall. The protein resides in the S-layer. Functionally, the S-layer is a paracrystalline mono-layered assembly of proteins which coat the surface of bacteria. The sequence is that of Cell surface protein from Thermoanaerobacter kivui (Acetogenium kivui).